A 303-amino-acid chain; its full sequence is Ribosomal RNA small subunit methyltransferase H (303 aa).

S-adenosyl-L-methionine is bound by residues 33–35 (GGH), D52, F78, D99, and Q106.

The protein belongs to the methyltransferase superfamily. RsmH family.

Its subcellular location is the cytoplasm. It catalyses the reaction cytidine(1402) in 16S rRNA + S-adenosyl-L-methionine = N(4)-methylcytidine(1402) in 16S rRNA + S-adenosyl-L-homocysteine + H(+). In terms of biological role, specifically methylates the N4 position of cytidine in position 1402 (C1402) of 16S rRNA. This chain is Ribosomal RNA small subunit methyltransferase H, found in Phytoplasma australiense.